The sequence spans 408 residues: Argininosuccinate synthase (408 aa).

Residues 12-20 (AYSGGLDTS) and Ala-39 each bind ATP. L-citrulline contacts are provided by Tyr-90 and Ser-95. Gly-120 is an ATP binding site. Positions 122, 126, and 127 each coordinate L-aspartate. Asn-126 contacts L-citrulline. Arg-130, Ser-181, Ser-190, Glu-266, and Tyr-278 together coordinate L-citrulline.

Belongs to the argininosuccinate synthase family. Type 1 subfamily. In terms of assembly, homotetramer.

It localises to the cytoplasm. The enzyme catalyses L-citrulline + L-aspartate + ATP = 2-(N(omega)-L-arginino)succinate + AMP + diphosphate + H(+). Its pathway is amino-acid biosynthesis; L-arginine biosynthesis; L-arginine from L-ornithine and carbamoyl phosphate: step 2/3. The protein is Argininosuccinate synthase of Methylococcus capsulatus (strain ATCC 33009 / NCIMB 11132 / Bath).